A 159-amino-acid polypeptide reads, in one-letter code: Ecotin (159 aa).

An N-terminal signal peptide occupies residues M1–A22. A disulfide bridge connects residues C68 and C105.

Belongs to the protease inhibitor I11 (ecotin) family. In terms of assembly, homodimer.

The protein resides in the periplasm. Its function is as follows. General inhibitor of family S1 serine proteases. This is Ecotin from Pseudomonas putida (strain ATCC 700007 / DSM 6899 / JCM 31910 / BCRC 17059 / LMG 24140 / F1).